The sequence spans 218 residues: Protein-L-isoaspartate O-methyltransferase 1 (218 aa).

Residue S69 is part of the active site.

It belongs to the methyltransferase superfamily. L-isoaspartyl/D-aspartyl protein methyltransferase family.

The protein localises to the cytoplasm. The catalysed reaction is [protein]-L-isoaspartate + S-adenosyl-L-methionine = [protein]-L-isoaspartate alpha-methyl ester + S-adenosyl-L-homocysteine. Functionally, catalyzes the methyl esterification of L-isoaspartyl residues in peptides and proteins that result from spontaneous decomposition of normal L-aspartyl and L-asparaginyl residues. It plays a role in the repair and/or degradation of damaged proteins. In Marinobacter nauticus (strain ATCC 700491 / DSM 11845 / VT8) (Marinobacter aquaeolei), this protein is Protein-L-isoaspartate O-methyltransferase 1.